The sequence spans 504 residues: Putative glycerol-3-phosphate transporter 2 (504 aa).

12 helical membrane-spanning segments follow: residues 31–51, 84–104, 116–136, 145–165, 178–198, 210–230, 280–302, 324–344, 352–372, 378–398, 424–444, and 452–472; these read LSFK…YIAF, ALLG…MFVA, FLTI…VAFW, FLAV…CIVA, MIMG…SLIA, FLGP…FLPV, IPGV…TFLY, GNLS…AGYI, AITA…YRVF, TINV…FALI, AIID…TGYI, and VFYM…KLII.

This sequence belongs to the major facilitator superfamily. Organophosphate:Pi antiporter (OPA) (TC 2.A.1.4) family. Expressed in the root-hair differentiation zone.

The protein localises to the membrane. The polypeptide is Putative glycerol-3-phosphate transporter 2 (Arabidopsis thaliana (Mouse-ear cress)).